Here is a 351-residue protein sequence, read N- to C-terminus: MFLDERKKRILQSIIDDYISTAEPVGSRTVARKHELGLSSATIRNEMADLEEMGYLTQPHTSAGRIPSDKGYRFYVDQLMKQSELTMEEIYSIKSAMDTKINELSQLLKQVSVAMSKITKYASMAALPEKKNSVLKAVQVVPVEKGKALVVVITNSGTIKNSLINISETVLPEHLVYVSNIFNEKLSGLTIGQINMPVIREIELLMGPSQDILMPVLNGVTDCIEQIDKSEVFLEGAINMLNYPEFSNVERAREFLKLMVEKDLISRVLKDANSEKDKIVIKIGHENDIEEMKECSLITTTYTAGDVVIGTIGIIGPTRMEYSKVLAAINYMKSKMKEHVERLIGKDLSGK.

The protein belongs to the HrcA family.

Functionally, negative regulator of class I heat shock genes (grpE-dnaK-dnaJ and groELS operons). Prevents heat-shock induction of these operons. The protein is Heat-inducible transcription repressor HrcA of Acetivibrio thermocellus (strain ATCC 27405 / DSM 1237 / JCM 9322 / NBRC 103400 / NCIMB 10682 / NRRL B-4536 / VPI 7372) (Clostridium thermocellum).